The sequence spans 264 residues: Thymidylate synthase (264 aa).

DUMP is bound at residue arginine 21. Histidine 51 is a binding site for (6R)-5,10-methylene-5,6,7,8-tetrahydrofolate. A dUMP-binding site is contributed by 126 to 127 (RR). The Nucleophile role is filled by cysteine 146. Residues 166 to 169 (RSAD), asparagine 177, and 207 to 209 (HIY) each bind dUMP. Aspartate 169 contacts (6R)-5,10-methylene-5,6,7,8-tetrahydrofolate. Position 263 (serine 263) interacts with (6R)-5,10-methylene-5,6,7,8-tetrahydrofolate.

Belongs to the thymidylate synthase family. Bacterial-type ThyA subfamily. Homodimer.

It localises to the cytoplasm. The catalysed reaction is dUMP + (6R)-5,10-methylene-5,6,7,8-tetrahydrofolate = 7,8-dihydrofolate + dTMP. Its pathway is pyrimidine metabolism; dTTP biosynthesis. Its function is as follows. Catalyzes the reductive methylation of 2'-deoxyuridine-5'-monophosphate (dUMP) to 2'-deoxythymidine-5'-monophosphate (dTMP) while utilizing 5,10-methylenetetrahydrofolate (mTHF) as the methyl donor and reductant in the reaction, yielding dihydrofolate (DHF) as a by-product. This enzymatic reaction provides an intracellular de novo source of dTMP, an essential precursor for DNA biosynthesis. This chain is Thymidylate synthase, found in Bacillus pumilus (strain SAFR-032).